Consider the following 442-residue polypeptide: DMATS-type prenyltransferase mfmD (442 aa).

The protein belongs to the tryptophan dimethylallyltransferase family.

The protein operates within secondary metabolite biosynthesis; terpenoid biosynthesis. Its function is as follows. Prenyltransferase; part of the gene cluster that mediates the biosynthesis of the phthalide-terpenoid hybrid 11'-O-desmethylfendlerol. Within the pathway, mfmD is responsible for farnesylation of the cyclopolic acid intermediate via an O-prenylation reaction. The biosynthesis of 11'-O-desmethylfendlerol begins with the NR-PKS mfmB that forms 3,5-dimethylorsellinic acid (DMOA), which is then transformed into the phthalide 5,7-dihydroxy-4-(hydroxymethyl)-6-methylphthalide by the cytochrome P450 monooxygenase mfmA and the hydrolase mfmC. Subsequently, the methyltransferase mfmE catalyzes 7-O-methylation to yield 5-hydroxy-4-(hydroxymethyl)-7-methoxy-6-methylphthalide, which undergoes C-3 hydroxylation by the cytochrome P450 monooxygenase mfmF. The resultant cyclopolic acid (2,5-dihydroxy-4-(hydroxymethyl)-7-methoxy-6-methylphthalide) is then farnesylated by the DMATS-type prenyltransferase mfmD to afford 5-O-farnesylcyclopolic acid. Finally, the Pyr4-family terpene cyclase mfmH cyclizes the farnesyl moiety of 5-O-farnesylcyclopolic acid into a drimane-like structure, thus completing the biosynthesis of 11'-O-desmethylfendlerol. The sequence is that of DMATS-type prenyltransferase mfmD from Annulohypoxylon moriforme (Filamentous fungus).